A 202-amino-acid polypeptide reads, in one-letter code: Small ribosomal subunit protein uS4c (202 aa).

The S4 RNA-binding domain occupies 89 to 152 (MRLDNIIFRL…QSNTFINNCI (64 aa)).

The protein belongs to the universal ribosomal protein uS4 family. Part of the 30S ribosomal subunit. Contacts protein S5. The interaction surface between S4 and S5 is involved in control of translational fidelity.

The protein resides in the plastid. Functionally, one of the primary rRNA binding proteins, it binds directly to 16S rRNA where it nucleates assembly of the body of the 30S subunit. In terms of biological role, with S5 and S12 plays an important role in translational accuracy. This is Small ribosomal subunit protein uS4c (rps4) from Epifagus virginiana (Beechdrops).